The sequence spans 141 residues: Large ribosomal subunit protein uL11 (141 aa).

Belongs to the universal ribosomal protein uL11 family. Part of the ribosomal stalk of the 50S ribosomal subunit. Interacts with L10 and the large rRNA to form the base of the stalk. L10 forms an elongated spine to which 2 L12 dimers bind in a sequential fashion forming a pentameric L10(L12)2(L12)2 complex. In stalled/isolated 50S subunits interacts with RqcH. One or more lysine residues are methylated.

Functionally, forms part of the ribosomal stalk which helps the ribosome interact with GTP-bound translation factors. Required to recruit RqcH, which is part of the ribosome quality control system (RQC), to stalled 50S ribosomal subunits. This is Large ribosomal subunit protein uL11 from Bacillus subtilis (strain 168).